An 826-amino-acid polypeptide reads, in one-letter code: Zinc phosphodiesterase ELAC protein 2 (826 aa).

Residues 1 to 16 (MWALCSLLRSAAGRTM) constitute a mitochondrion transit peptide. Disordered regions lie at residues 16-51 (MSQGRTISQAPARRERPRKDPLRHLRTREKRGPSGC) and 188-231 (EQRR…VSQR). Positions 27–38 (ARRERPRKDPLR) are enriched in basic and acidic residues. Ser-199, Ser-208, Ser-212, Ser-229, Ser-618, and Ser-736 each carry phosphoserine. The segment covering 208–224 (SPERSSDSESNENEPHL) has biased composition (basic and acidic residues). Residues 798 to 826 (ELAGGLEDGEPQQKRAHTEEPQAKKVRAQ) form a disordered region. Residues 808–820 (PQQKRAHTEEPQA) are compositionally biased toward basic and acidic residues.

This sequence belongs to the RNase Z family. Homodimer. Interacts with PTCD1. Zn(2+) is required as a cofactor.

The protein resides in the mitochondrion. It localises to the mitochondrion matrix. Its subcellular location is the mitochondrion nucleoid. It is found in the nucleus. It catalyses the reaction Endonucleolytic cleavage of RNA, removing extra 3' nucleotides from tRNA precursor, generating 3' termini of tRNAs. A 3'-hydroxy group is left at the tRNA terminus and a 5'-phosphoryl group is left at the trailer molecule.. Zinc phosphodiesterase, which displays mitochondrial tRNA 3'-processing endonuclease activity. Involved in tRNA maturation, by removing a 3'-trailer from precursor tRNA. Associates with mitochondrial DNA complexes at the nucleoids to initiate RNA processing and ribosome assembly. In Pan troglodytes (Chimpanzee), this protein is Zinc phosphodiesterase ELAC protein 2 (ELAC2).